A 241-amino-acid chain; its full sequence is Ribose-5-phosphate isomerase A (241 aa).

Substrate is bound by residues 29–32 (TGTT), 84–87 (DGAD), and 97–100 (KGGG). Catalysis depends on Glu106, which acts as the Proton acceptor. Lys124 is a substrate binding site.

It belongs to the ribose 5-phosphate isomerase family. As to quaternary structure, homodimer.

It carries out the reaction aldehydo-D-ribose 5-phosphate = D-ribulose 5-phosphate. It participates in carbohydrate degradation; pentose phosphate pathway; D-ribose 5-phosphate from D-ribulose 5-phosphate (non-oxidative stage): step 1/1. Catalyzes the reversible conversion of ribose-5-phosphate to ribulose 5-phosphate. The protein is Ribose-5-phosphate isomerase A of Thermoplasma acidophilum (strain ATCC 25905 / DSM 1728 / JCM 9062 / NBRC 15155 / AMRC-C165).